The sequence spans 582 residues: SHC-transforming protein 2 (582 aa).

Disordered regions lie at residues 1 to 24 (MTQG…APTT) and 47 to 70 (GPAA…AGPG). Residues 8 to 20 (RAPPAPPAPPEPE) are compositionally biased toward pro residues. The PID domain occupies 147–329 (LGPGVSYVVR…AGPEESAWGD (183 aa)). The tract at residues 330–486 (EEDSLEHNYY…PTEEQLRQEP (157 aa)) is CH1. A phosphotyrosine mark is found at Tyr-338, Tyr-339, and Tyr-414. A disordered region spans residues 460–481 (PLEDQWPSPPTRRAPVAPTEEQ). Residues 487 to 578 (WYHGRMSRRA…ESELHLRGVV (92 aa)) enclose the SH2 domain.

As to quaternary structure, interacts with the Trk receptors in a phosphotyrosine-dependent manner and MEGF12. Once activated, binds to GRB2. In terms of processing, phosphorylated on tyrosines by the Trk receptors. As to expression, expressed in brain. Expressed at high level in the hypothalamus and at low level in the caudate nucleus.

Its function is as follows. Signaling adapter that couples activated growth factor receptors to signaling pathway in neurons. Involved in the signal transduction pathways of neurotrophin-activated Trk receptors in cortical neurons. The chain is SHC-transforming protein 2 (SHC2) from Homo sapiens (Human).